We begin with the raw amino-acid sequence, 838 residues long: Rab effector MyRIP (838 aa).

The RabBD domain maps to 4–124; it reads KLDLSGLSNN…TQSLEWFYNN (121 aa). The FYVE-type zinc finger occupies 58-112; that stretch reads KFNEHCCIRCCSPFTFLLNPKRQCLDCHYNICKSCCSYSQSERGYICAACQKSRH. Positions 188-237 form a coiled coil; it reads ADTLTVALRVAEEAIEEAIAKAENYKDSLEKQNEARYLHEHKEELIEELA. Composition is skewed to polar residues over residues 263–290 and 451–484; these read QNQK…TSQP and TFTQ…SPST. 4 disordered regions span residues 263–331, 444–501, 525–570, and 681–838; these read QNQK…TEVE, SQHD…ETHL, NFNP…LYSA, and ERDV…EKRN. 2 stretches are compositionally biased toward basic and acidic residues: residues 697–736 and 753–838; these read NKQE…ERQT and RQMK…EKRN. Residues 714 to 833 are a coiled coil; sequence KERRESKRES…DLEKKRKSIR (120 aa).

Interacts with prkar2aa.

Its subcellular location is the cytoplasm. The protein localises to the perinuclear region. It is found in the cytoplasmic vesicle. It localises to the secretory vesicle. Its function is as follows. May link secretory vesicles to actin filaments. May function as a protein kinase A-anchoring protein (AKAP). May act as a scaffolding protein that links PKA to components of the exocytosis machinery, thus facilitating exocytosis. The chain is Rab effector MyRIP (myrip) from Danio rerio (Zebrafish).